The sequence spans 649 residues: FAS-associated factor 1 (649 aa).

One can recognise a UBA domain in the interval 1 to 57; the sequence is MASNMDREMILADFQACTGIENIDEAITLLEQNNWDLVAAINGVIPQENGILQSDFG. Disordered regions lie at residues 56 to 84 and 266 to 290; these read FGGE…SAFR and RRTS…VSDS. Over residues 68-82 the composition is skewed to low complexity; sequence PASHPAPASTPSSSA. Position 319 is a phosphoserine (Ser-319). A UBX domain is found at 568-645; it reads NAEPVSKLRI…NLFPQETLFL (78 aa). Thr-579 is modified (phosphothreonine). Residue Ser-581 is modified to Phosphoserine.

As to quaternary structure, interacts with CDT1 and ATPase VCP/p97. Interacts (via UBA domain) with FAS (via death domain). Interacts (via UBA domain) with NLRP12 (via DAPIN/PYRIN domain).

It localises to the nucleus. Functionally, ubiquitin-binding protein. Required for the progression of DNA replication forks by targeting DNA replication licensing factor CDT1 for degradation. Potentiates but cannot initiate FAS-induced apoptosis. The polypeptide is FAS-associated factor 1 (Faf1) (Mus musculus (Mouse)).